Consider the following 519-residue polypeptide: Exodeoxyribonuclease 7 large subunit (519 aa).

A disordered region spans residues 500 to 519 (VGRGKTRKPKEEPPAQGSLL).

This sequence belongs to the XseA family. As to quaternary structure, heterooligomer composed of large and small subunits.

It is found in the cytoplasm. It carries out the reaction Exonucleolytic cleavage in either 5'- to 3'- or 3'- to 5'-direction to yield nucleoside 5'-phosphates.. Its function is as follows. Bidirectionally degrades single-stranded DNA into large acid-insoluble oligonucleotides, which are then degraded further into small acid-soluble oligonucleotides. The polypeptide is Exodeoxyribonuclease 7 large subunit (Cereibacter sphaeroides (strain ATCC 17029 / ATH 2.4.9) (Rhodobacter sphaeroides)).